The chain runs to 210 residues: 7-carboxy-7-deazaguanine synthase (210 aa).

Substrate is bound by residues 12 to 14 (LQG) and Arg27. Positions 18-210 (NAGRPAVFCR…MQTHKYLNIP (193 aa)) constitute a Radical SAM core domain. [4Fe-4S] cluster contacts are provided by Cys31, Cys46, and Cys49. An S-adenosyl-L-methionine-binding site is contributed by 48 to 50 (FCD). Thr51 contacts Mg(2+). Thr90 serves as a coordination point for substrate. Residues Gly92, 133 to 135 (SPK), and 173 to 176 (QPMD) each bind S-adenosyl-L-methionine. A substrate-binding site is contributed by Pro210.

This sequence belongs to the radical SAM superfamily. 7-carboxy-7-deazaguanine synthase family. As to quaternary structure, homodimer. Requires [4Fe-4S] cluster as cofactor. It depends on S-adenosyl-L-methionine as a cofactor. Mg(2+) is required as a cofactor.

The catalysed reaction is 6-carboxy-5,6,7,8-tetrahydropterin + H(+) = 7-carboxy-7-deazaguanine + NH4(+). The protein operates within purine metabolism; 7-cyano-7-deazaguanine biosynthesis. Catalyzes the complex heterocyclic radical-mediated conversion of 6-carboxy-5,6,7,8-tetrahydropterin (CPH4) to 7-carboxy-7-deazaguanine (CDG), a step common to the biosynthetic pathways of all 7-deazapurine-containing compounds. In Burkholderia multivorans (strain ATCC 17616 / 249), this protein is 7-carboxy-7-deazaguanine synthase.